Here is a 137-residue protein sequence, read N- to C-terminus: Small ribosomal subunit protein uS9 (137 aa).

The protein belongs to the universal ribosomal protein uS9 family.

In Saccharolobus solfataricus (strain ATCC 35092 / DSM 1617 / JCM 11322 / P2) (Sulfolobus solfataricus), this protein is Small ribosomal subunit protein uS9 (rps9).